We begin with the raw amino-acid sequence, 420 residues long: Probable serine hydroxymethyltransferase (420 aa).

(6S)-5,6,7,8-tetrahydrofolate is bound by residues Leu-121 and 125–127 (GHL). Lys-230 is modified (N6-(pyridoxal phosphate)lysine). Residues Glu-246 and 354–356 (SPF) each bind (6S)-5,6,7,8-tetrahydrofolate.

The protein belongs to the SHMT family. In terms of assembly, homodimer. It depends on pyridoxal 5'-phosphate as a cofactor.

The protein resides in the cytoplasm. It carries out the reaction (6R)-5,10-methylene-5,6,7,8-tetrahydrofolate + glycine + H2O = (6S)-5,6,7,8-tetrahydrofolate + L-serine. It participates in one-carbon metabolism; tetrahydrofolate interconversion. In terms of biological role, catalyzes the reversible interconversion of serine and glycine with tetrahydrofolate (THF) serving as the one-carbon carrier. This reaction serves as the major source of one-carbon groups required for the biosynthesis of purines, thymidylate, methionine, and other important biomolecules. In Rickettsia bellii (strain RML369-C), this protein is Probable serine hydroxymethyltransferase.